A 158-amino-acid chain; its full sequence is 2-C-methyl-D-erythritol 2,4-cyclodiphosphate synthase (158 aa).

2 residues coordinate a divalent metal cation: Asp9 and His11. 4-CDP-2-C-methyl-D-erythritol 2-phosphate-binding positions include 9 to 11 (DVH) and 35 to 36 (HS). His43 is an a divalent metal cation binding site. Residues 57 to 59 (DIG), 62 to 66 (FPDTD), 101 to 107 (AQKPKMA), 133 to 136 (TTTE), Phe140, and Arg143 contribute to the 4-CDP-2-C-methyl-D-erythritol 2-phosphate site.

This sequence belongs to the IspF family. Homotrimer. It depends on a divalent metal cation as a cofactor.

It catalyses the reaction 4-CDP-2-C-methyl-D-erythritol 2-phosphate = 2-C-methyl-D-erythritol 2,4-cyclic diphosphate + CMP. It functions in the pathway isoprenoid biosynthesis; isopentenyl diphosphate biosynthesis via DXP pathway; isopentenyl diphosphate from 1-deoxy-D-xylulose 5-phosphate: step 4/6. Functionally, involved in the biosynthesis of isopentenyl diphosphate (IPP) and dimethylallyl diphosphate (DMAPP), two major building blocks of isoprenoid compounds. Catalyzes the conversion of 4-diphosphocytidyl-2-C-methyl-D-erythritol 2-phosphate (CDP-ME2P) to 2-C-methyl-D-erythritol 2,4-cyclodiphosphate (ME-CPP) with a corresponding release of cytidine 5-monophosphate (CMP). The protein is 2-C-methyl-D-erythritol 2,4-cyclodiphosphate synthase of Bacillus pumilus (strain SAFR-032).